The sequence spans 144 residues: Large ribosomal subunit protein uL16 (144 aa).

This sequence belongs to the universal ribosomal protein uL16 family. As to quaternary structure, part of the 50S ribosomal subunit.

Its function is as follows. Binds 23S rRNA and is also seen to make contacts with the A and possibly P site tRNAs. In Lactiplantibacillus plantarum (strain ATCC BAA-793 / NCIMB 8826 / WCFS1) (Lactobacillus plantarum), this protein is Large ribosomal subunit protein uL16.